The primary structure comprises 312 residues: Protease HtpX homolog (312 aa).

2 helical membrane passes run 6–26 (TAVL…AIGG) and 28–48 (GGMM…YWYA). A Zn(2+)-binding site is contributed by histidine 130. Residue glutamate 131 is part of the active site. Histidine 134 contacts Zn(2+). 2 helical membrane passes run 145-165 (ITAS…FFGG) and 173-193 (PFGG…AMVV). Glutamate 202 contacts Zn(2+). Over residues 287-297 (PAPARAAPARG) the composition is skewed to low complexity. Residues 287 to 312 (PAPARAAPARGPWGGNTGGTRRGPWG) are disordered. Gly residues predominate over residues 298-312 (PWGGNTGGTRRGPWG).

It belongs to the peptidase M48B family. Requires Zn(2+) as cofactor.

The protein resides in the cell inner membrane. The protein is Protease HtpX homolog of Azorhizobium caulinodans (strain ATCC 43989 / DSM 5975 / JCM 20966 / LMG 6465 / NBRC 14845 / NCIMB 13405 / ORS 571).